The chain runs to 312 residues: Probable rRNA-processing protein EBP2 (312 aa).

A disordered region spans residues 1–32; sequence MLHHEDESSPESDSDFDASELTDKELQEAFSQ. A compositionally biased stretch (acidic residues) spans 8–20; sequence SSPESDSDFDASE. A coiled-coil region spans residues 140 to 176; the sequence is EMAKTDQHMQKIRHKLQLKQASMEKSEKAKQLRALRK. The disordered stretch occupies residues 211 to 312; sequence LDFLEGDQTP…VRQKMKSKRR (102 aa). Over residues 282–312 the composition is skewed to basic residues; the sequence is KGPHRPGKKGGKNANKRPGKNVRQKMKSKRR.

Belongs to the EBP2 family.

The protein localises to the nucleus. The protein resides in the nucleolus. Required for the processing of the 27S pre-rRNA. This Xenopus laevis (African clawed frog) protein is Probable rRNA-processing protein EBP2 (ebna1bp2).